Here is a 250-residue protein sequence, read N- to C-terminus: Cobalt transport protein CbiM (250 aa).

Residues 1 to 24 (MKYWGTALLGAFCVFFFTPNTAYA) form the signal peptide. Helical transmembrane passes span 32–52 (LPAGWCLFWLALSVPFVFWGI), 67–87 (MLLGLAGAFVFVLSALKIPSV), 99–119 (LGAILFGPAVMSVLGCIVLLF), 122–142 (LLLAHGGITTLGANVFSMGVM), 161–181 (VAVFLAASLGNMTTYMVTSLQ), and 203–223 (IFAITQIPLAITEGLLTVFVF).

The protein belongs to the CbiM family. In terms of assembly, forms an energy-coupling factor (ECF) transporter complex composed of an ATP-binding protein (A component, CbiO), a transmembrane protein (T component, CbiQ) and 2 possible substrate-capture proteins (S components, CbiM and CbiN) of unknown stoichimetry.

It localises to the cell membrane. It participates in cofactor biosynthesis; adenosylcobalamin biosynthesis. Functionally, part of the energy-coupling factor (ECF) transporter complex CbiMNOQ involved in cobalt import. This Desulforamulus reducens (strain ATCC BAA-1160 / DSM 100696 / MI-1) (Desulfotomaculum reducens) protein is Cobalt transport protein CbiM.